We begin with the raw amino-acid sequence, 222 residues long: N-(5'-phosphoribosyl)anthranilate isomerase (222 aa).

Belongs to the TrpF family.

It catalyses the reaction N-(5-phospho-beta-D-ribosyl)anthranilate = 1-(2-carboxyphenylamino)-1-deoxy-D-ribulose 5-phosphate. It functions in the pathway amino-acid biosynthesis; L-tryptophan biosynthesis; L-tryptophan from chorismate: step 3/5. The polypeptide is N-(5'-phosphoribosyl)anthranilate isomerase (Xanthomonas campestris pv. campestris (strain 8004)).